Here is a 350-residue protein sequence, read N- to C-terminus: C5a anaphylatoxin chemotactic receptor 1 (350 aa).

Residues 1-37 lie on the Extracellular side of the membrane; it reads MDDMCSILTEEELSLYNITDCEFVKPGGLGPVLGPRH. Asparagine 17 carries an N-linked (GlcNAc...) asparagine glycan. Residues 38 to 64 form a helical membrane-spanning segment; that stretch reads LSALVFYGLVFLLGVPGNALVVWVTGF. At 65–69 the chain is on the cytoplasmic side; the sequence is RMPRS. The helical transmembrane segment at 70–93 threads the bilayer; the sequence is VTSLWFLNLALADLLCCLSLPLLM. The Extracellular portion of the chain corresponds to 94–110; sequence VPLAMDQHWPFGPVACK. Cysteine 109 and cysteine 187 are disulfide-bonded. A helical membrane pass occupies residues 111–132; it reads LLKGLLYLIMFCSVLLLVLISL. Topologically, residues 133–154 are cytoplasmic; that stretch reads DRFLLVSWPVWCQNWRRPRKAG. Residues 155–174 traverse the membrane as a helical segment; that stretch reads WVCVGVWLLALLGSIPQFVY. Topologically, residues 175 to 197 are extracellular; sequence VKEVQLSTSKSECLGLYTVASAW. The helical transmembrane segment at 198–223 threads the bilayer; sequence ANTTARFLVGFVLPFITIVTCHWVVY. The Cytoplasmic portion of the chain corresponds to 224–247; sequence SRARRGSGVGPGRVSEARSRRTLR. Residues 248–270 traverse the membrane as a helical segment; the sequence is VIVAVSLSFFLCWFPLHILDFLV. At 271–287 the chain is on the extracellular side; it reads LSTPRHSSHSANIQLAH. A helical transmembrane segment spans residues 288–308; sequence TLALCLAYCNSCLNPLLYVCL. Residues 309-350 are Cytoplasmic-facing; the sequence is GRGFKQNINRSLRNMFNFATEESVTRQSMFKSTSERTQEMNM.

This sequence belongs to the G-protein coupled receptor 1 family. High expression in head, kidney and posterior kidney, lower levels in peripheral blood leukocytes and spleen, low expression in brain and gills, heart, intestine and very low expression in liver and muscle.

It localises to the cell membrane. Receptor for the chemotactic and inflammatory peptide anaphylatoxin C5a. This receptor stimulates chemotaxis, granule enzyme release and superoxide anion production. This chain is C5a anaphylatoxin chemotactic receptor 1 (c5ar1), found in Oncorhynchus mykiss (Rainbow trout).